We begin with the raw amino-acid sequence, 212 residues long: MGSCDRKALWALSFLLLLLGSSSVQGTWEAMLPVRLAEKSQAEEVAATGSRQPHADRCPPPPRTLPPGACQATRCQSDSECPRHRRCCYNGCAYACLEAVPPPPVLDWLVQPKPRWLGGNGWLLDGPEEVLQAEACSTTEDGAEPLLCPSGYECHILQPGDAAQGIPNHGRCVKQRRQAEGRVLRQKLHKEYPEGDSKYVAEPGKGQQRHFP.

A signal peptide spans 1 to 26; the sequence is MGSCDRKALWALSFLLLLLGSSSVQG. A disordered region spans residues 43–62; sequence EEVAATGSRQPHADRCPPPP. Positions 51 to 100 constitute a WAP domain; the sequence is RQPHADRCPPPPRTLPPGACQATRCQSDSECPRHRRCCYNGCAYACLEAV. 4 disulfides stabilise this stretch: Cys58/Cys88, Cys70/Cys92, Cys75/Cys87, and Cys81/Cys96. Positions 191-212 are disordered; the sequence is EYPEGDSKYVAEPGKGQQRHFP.

Vascular smooth muscle and prostate. Periacinar ring.

It is found in the secreted. In terms of biological role, has growth inhibitory activity. The protein is WAP four-disulfide core domain protein 1 (Wfdc1) of Rattus norvegicus (Rat).